Here is a 107-residue protein sequence, read N- to C-terminus: Iron-binding protein IscA (107 aa).

Fe cation-binding residues include C35, C99, and C101.

Belongs to the HesB/IscA family. As to quaternary structure, homodimer; may form tetramers and higher multimers. Fe cation serves as cofactor.

Functionally, is able to transfer iron-sulfur clusters to apo-ferredoxin. Multiple cycles of [2Fe2S] cluster formation and transfer are observed, suggesting that IscA acts catalytically. Recruits intracellular free iron so as to provide iron for the assembly of transient iron-sulfur cluster in IscU in the presence of IscS, L-cysteine and the thioredoxin reductase system TrxA/TrxB. In Pectobacterium carotovorum subsp. carotovorum (strain PC1), this protein is Iron-binding protein IscA.